We begin with the raw amino-acid sequence, 146 residues long: 3-hydroxyacyl-[acyl-carrier-protein] dehydratase FabZ (146 aa).

The active site involves histidine 48.

It belongs to the thioester dehydratase family. FabZ subfamily.

The protein resides in the cytoplasm. The catalysed reaction is a (3R)-hydroxyacyl-[ACP] = a (2E)-enoyl-[ACP] + H2O. Its function is as follows. Involved in unsaturated fatty acids biosynthesis. Catalyzes the dehydration of short chain beta-hydroxyacyl-ACPs and long chain saturated and unsaturated beta-hydroxyacyl-ACPs. The chain is 3-hydroxyacyl-[acyl-carrier-protein] dehydratase FabZ from Paracidovorax citrulli (strain AAC00-1) (Acidovorax citrulli).